A 231-amino-acid polypeptide reads, in one-letter code: Large ribosomal subunit protein uL1 (231 aa).

The protein belongs to the universal ribosomal protein uL1 family. Part of the 50S ribosomal subunit.

Its function is as follows. Binds directly to 23S rRNA. The L1 stalk is quite mobile in the ribosome, and is involved in E site tRNA release. In terms of biological role, protein L1 is also a translational repressor protein, it controls the translation of the L11 operon by binding to its mRNA. The sequence is that of Large ribosomal subunit protein uL1 from Kosmotoga olearia (strain ATCC BAA-1733 / DSM 21960 / TBF 19.5.1).